A 222-amino-acid chain; its full sequence is Bone marrow proteoglycan (222 aa).

The N-terminal stretch at 1-16 is a signal peptide; the sequence is MKLPLLLALLFGAVSA. The propeptide at 17-105 is acidic; that stretch reads LHLRSETSTF…VKVVGIPGCQ (89 aa). Residue T23 is glycosylated (O-linked (GalNAc...) threonine; partial). S24 carries O-linked (GalNAc...) serine glycosylation. T25 carries an O-linked (GalNAc...) threonine glycan. A disordered region spans residues 25–75; the sequence is TFETPLGAKTLPEDEETPEQEMEETPCRELEEEEEWGSGSEDASKKDGAVE. T34 carries an O-linked (GalNAc...) threonine; partial glycan. Positions 37–60 are enriched in acidic residues; sequence EDEETPEQEMEETPCRELEEEEEW. A glycan (O-linked (Xyl...) (chondroitin sulfate) serine) is linked at S62. N86 carries N-linked (GlcNAc...) asparagine glycosylation. The C-type lectin domain maps to 104–222; sequence CQTCRYLLVR…LRRLPFICSY (119 aa). 2 disulfides stabilise this stretch: C125–C220 and C197–C212.

As to quaternary structure, in pregnancy serum, the proform exists as a disulfide-linked 2:2 heterotetramer with PAPPA, as a disulfide-linked 2:2 heterotetramer with AGT, and as a complex (probably a 2:2:2 heterohexamer) with AGT and C3dg. In terms of processing, nitrated. As to expression, detected in plasma and urine (at protein level). Detected in placenta (at protein level). High levels of the proform in placenta and pregnancy serum; in placenta, localized to X cells of septa and anchoring villi. Lower levels in a variety of other tissues including kidney, myometrium, endometrium, ovaries, breast, prostate, bone marrow and colon.

It localises to the secreted. It is found in the cytoplasmic vesicle. Its subcellular location is the secretory vesicle. Functionally, cytotoxin and helminthotoxin. Also induces non-cytolytic histamine release from human basophils. Involved in antiparasitic defense mechanisms and immune hypersensitivity reactions. The proform acts as a proteinase inhibitor, reducing the activity of PAPPA. This Homo sapiens (Human) protein is Bone marrow proteoglycan (PRG2).